The primary structure comprises 221 residues: MGWEKGLAPREKLVRLGAESLTDAELLAIFLRTGLPGVHVMQLAENLLAQFGSLYQLMTAEQSAFHNARGVGISKYTQIKAIAELSRRLFFSRLAKEDAMLNPEATGQYLQLLLSRREREVFLVLFLDNQHHVIRHQEMFVGTINSVEVHPREIVREALKANAAALILAHNHPSGKAEPSQADRAITEQIVKACLLLEIRVLDHLVIGHGEFVSFAERGWI.

The MPN domain maps to Ala99–Ile221. His170, His172, and Asp183 together coordinate Zn(2+). Positions His170–Asp183 match the JAMM motif motif.

It belongs to the UPF0758 family. YicR subfamily.

The protein is UPF0758 protein ECA0145 of Pectobacterium atrosepticum (strain SCRI 1043 / ATCC BAA-672) (Erwinia carotovora subsp. atroseptica).